The primary structure comprises 1014 residues: Valine--tRNA ligase (1014 aa).

The 'HIGH' region signature appears at 49-59; the sequence is PNVTGSLHMGH. Residues 542 to 546 carry the 'KMSKS' region motif; the sequence is KMSKS. ATP is bound at residue Lys545. Residues 947–1014 are a coiled coil; that stretch reads VVDIETLRAK…ILRLRLQTLV (68 aa).

It belongs to the class-I aminoacyl-tRNA synthetase family. ValS type 1 subfamily. Monomer.

The protein resides in the cytoplasm. The catalysed reaction is tRNA(Val) + L-valine + ATP = L-valyl-tRNA(Val) + AMP + diphosphate. Catalyzes the attachment of valine to tRNA(Val). As ValRS can inadvertently accommodate and process structurally similar amino acids such as threonine, to avoid such errors, it has a 'posttransfer' editing activity that hydrolyzes mischarged Thr-tRNA(Val) in a tRNA-dependent manner. The chain is Valine--tRNA ligase from Nostoc sp. (strain PCC 7120 / SAG 25.82 / UTEX 2576).